The chain runs to 837 residues: Cap-specific mRNA (nucleoside-2'-O-)-methyltransferase 1 (837 aa).

Positions 1–66 are disordered; it reads MKRRTDPECT…EGKQPCSDDF (66 aa). The short motif at 2-18 is the Bipartite nuclear localization signal element; sequence KRRTDPECTAPLKKQKR. Phosphoserine occurs at positions 27, 30, and 52. Over residues 56–66 the composition is skewed to basic and acidic residues; the sequence is TEGKQPCSDDF. In terms of domain architecture, G-patch spans 86-132; sequence YNSVSQRLMAKMGFREGEGLGKYSQGRKDIVETSNQKGRRGLGLTLQ. Ser90 is subject to Phosphoserine. Lys107 carries the N6-acetyllysine modification. Substrate is bound by residues 202–206 and Arg217; that span reads KSVFD. Residues 230-449 enclose the RrmJ-type SAM-dependent 2'-O-MTase domain; sequence FFLNRAAMKM…ERYVVCKGLK (220 aa). Asn233 lines the S-adenosyl-L-methionine pocket. Lys238 is an active-site residue. S-adenosyl-L-methionine contacts are provided by residues 276–282 and 334–335; these read CAGPGGF and DI. The active site involves Asp363. Position 373–375 (373–375) interacts with substrate; it reads NLQ. Lys403 serves as the catalytic Proton acceptor. Asn438 lines the substrate pocket. The interaction with POLR2A stretch occupies residues 726 to 834; sequence SGGTPKLSYT…VLSFIQSHNP (109 aa). In terms of domain architecture, WW spans 751 to 785; the sequence is RTVNEPWTMGFSKSNNRKFFYNKKTQKSVYALPTE.

As to quaternary structure, interacts with POLR2A (via C-terminus).

The protein resides in the nucleus. It carries out the reaction a 5'-end (N(7)-methyl 5'-triphosphoguanosine)-ribonucleoside in mRNA + S-adenosyl-L-methionine = a 5'-end (N(7)-methyl 5'-triphosphoguanosine)-(2'-O-methyl-ribonucleoside) in mRNA + S-adenosyl-L-homocysteine + H(+). In terms of biological role, S-adenosyl-L-methionine-dependent methyltransferase that mediates mRNA cap1 2'-O-ribose methylation to the 5'-cap structure of mRNAs. Methylates the ribose of the first nucleotide of a m(7)GpppG-capped mRNA and small nuclear RNA (snRNA) to produce m(7)GpppRm (cap1). Displays a preference for cap0 transcripts. Cap1 modification is linked to higher levels of translation. May be involved in the interferon response pathway. This is Cap-specific mRNA (nucleoside-2'-O-)-methyltransferase 1 (Cmtr1) from Mus musculus (Mouse).